Here is a 1580-residue protein sequence, read N- to C-terminus: Ras GTPase-activating protein raskol (1580 aa).

Ser164 bears the Phosphoserine mark. At Thr167 the chain carries Phosphothreonine. The tract at residues 197–223 is disordered; that stretch reads LKRTKSVTKLERTKRGSGGLRGSRSHE. A phosphoserine mark is found at Ser221 and Ser224. The PH domain occupies 233-291; it reads STIDLSCTGAVGVAPVHQSVLGRRHCFQVRGGPRGERYYSCGSRQERDLWIYSLRKSIA. The 119-residue stretch at 282–400 folds into the C2 domain; the sequence is WIYSLRKSIA…TSRLPCEQWY (119 aa). The region spanning 490 to 700 is the Ras-GAP domain; it reads GLAGAFLTDV…ARMQQFLEII (211 aa). Disordered regions lie at residues 764 to 819, 857 to 892, 904 to 1023, 1112 to 1218, 1284 to 1313, 1334 to 1443, and 1561 to 1580; these read GMGT…QPQH, LLQQ…HQHP, AGNQ…SYDD, ANHH…QQFG, LSGG…YGRL, VGYG…LGKS, and YETQ…QKPQ. Polar residues predominate over residues 776–805; it reads ATSSTHSIASENQENRNPGSSGSHAGSNSE. Low complexity-rich tracts occupy residues 806–818, 857–885, and 926–939; these read QLLP…AQPQ, LLQQ…GHQQ, and SSSL…LLHG. A compositionally biased stretch (basic residues) spans 940-954; sequence HQQHAHHPQQLHPHH. The span at 987–1020 shows a compositional bias: low complexity; that stretch reads TSTPSSTRSRTLPRNGNPNANGNVGSSNNNQSGS. Residues 1140–1150 are compositionally biased toward polar residues; the sequence is SAKSSHCSSGY. Low complexity predominate over residues 1151–1169; it reads QSISTNPSPSQSSSPVESQ. 2 positions are modified to phosphoserine: Ser1158 and Ser1164. Residues 1186 to 1206 are compositionally biased toward polar residues; the sequence is PSYQLQPQTGSSRSSAQSNTH. Composition is skewed to low complexity over residues 1207 to 1216, 1285 to 1299, and 1351 to 1362; these read QQQQQQQQQQ, SGGS…ASTS, and HQQQQNPMQQQQ. Residues 1363 to 1372 are compositionally biased toward basic and acidic residues; sequence QRERDQEHKQ. Low complexity predominate over residues 1374–1388; the sequence is AGSVAGSVGSATSAA. Over residues 1396–1415 the composition is skewed to polar residues; it reads SARTLSDSSTDTEGHCNQLQ. Residues Ser1401 and Ser1403 each carry the phosphoserine modification. Residues 1427-1438 are compositionally biased toward gly residues; that stretch reads GGSGGGGAGSEQ. The segment covering 1563-1580 has biased composition (low complexity); it reads TQQQQQQHQAPPKTQKPQ.

The protein resides in the cytoplasm. Its subcellular location is the cell membrane. It localises to the apical cell membrane. Its function is as follows. GTPase-activating protein, which acts as a negative regulator for some members of the Ras family. Probably decreases their signaling activity by stimulating their intrinsic GTPase activity, thereby lowering the levels of the GTP-bound active form. Functions with DE-cadherin (shg) to promote embryonic border cell (BC) migration and adhesion by regulating the distribution of actin protrusions in BCs. Promotes shg-mediated adhesion at the BC interfaces and likely maintains BC cluster adhesion during BC detachment from the follicular epithelium and subsequent BC migration. Also required for restricting the development of actin-rich protrusions to the front of migrating BC clusters thus ensuring unidirectional BC migration. Possibly functions by suppressing Rac1 signaling in non-leading BCs, thus limiting its activity to leading BCs where it initiates localized actin cytoskeleton remodeling to produce the polarized protrusions. This chain is Ras GTPase-activating protein raskol, found in Drosophila melanogaster (Fruit fly).